We begin with the raw amino-acid sequence, 541 residues long: Formimidoyltransferase-cyclodeaminase (541 aa).

A formiminotransferase N-subdomain region spans residues 1–181; the sequence is MSQLVECVPN…GATVTGARKF (181 aa). Catalysis depends on H82, which acts as the For formimidoyltransferase activity. A folate-binding site is contributed by 163 to 172; it reads GPSSFVPSWG. The formiminotransferase C-subdomain stretch occupies residues 182–326; that stretch reads LIAFNINLLS…PKERIIEYLV (145 aa). The tract at residues 327–334 is linker; it reads PDSGPEQS. The tract at residues 335–541 is cyclodeaminase/cyclohydrolase; sequence LLDASLRAFV…VLGSLEARKE (207 aa). Catalysis depends on D412, which acts as the For cyclodeaminase activity. S520 carries the phosphoserine modification.

This sequence in the C-terminal section; belongs to the cyclodeaminase/cyclohydrolase family. In the N-terminal section; belongs to the formiminotransferase family. As to quaternary structure, homooctamer, including four polyglutamate binding sites. The subunits are arranged as a tetramer of dimers, and form a planar ring-shaped structure. Specifically expressed in liver (at protein level).

The protein resides in the cytoplasm. The protein localises to the cytosol. It is found in the golgi apparatus. Its subcellular location is the cytoskeleton. It localises to the microtubule organizing center. The protein resides in the centrosome. The protein localises to the centriole. The catalysed reaction is 5-formimidoyltetrahydrofolate + L-glutamate = N-formimidoyl-L-glutamate + (6S)-5,6,7,8-tetrahydrofolate. It carries out the reaction 5-formimidoyltetrahydrofolate + 2 H(+) = (6R)-5,10-methenyltetrahydrofolate + NH4(+). It functions in the pathway amino-acid degradation; L-histidine degradation into L-glutamate; L-glutamate from N-formimidoyl-L-glutamate (transferase route): step 1/1. In terms of biological role, folate-dependent enzyme, that displays both transferase and deaminase activity. Serves to channel one-carbon units from formiminoglutamate to the folate pool. Binds and promotes bundling of vimentin filaments originating from the Golgi. The chain is Formimidoyltransferase-cyclodeaminase (Ftcd) from Rattus norvegicus (Rat).